The sequence spans 98 residues: NADH-ubiquinone oxidoreductase chain 4L (98 aa).

A run of 3 helical transmembrane segments spans residues 1 to 21 (MTSINLNLTVAFSLALAGVLI), 28 to 48 (STLLCLEGMMLSLFVMMALLI), and 59 to 79 (APIILLVFSACEAGVGLALLV).

It belongs to the complex I subunit 4L family. In terms of assembly, core subunit of respiratory chain NADH dehydrogenase (Complex I) which is composed of 45 different subunits.

The protein resides in the mitochondrion inner membrane. It carries out the reaction a ubiquinone + NADH + 5 H(+)(in) = a ubiquinol + NAD(+) + 4 H(+)(out). Core subunit of the mitochondrial membrane respiratory chain NADH dehydrogenase (Complex I) which catalyzes electron transfer from NADH through the respiratory chain, using ubiquinone as an electron acceptor. Part of the enzyme membrane arm which is embedded in the lipid bilayer and involved in proton translocation. The chain is NADH-ubiquinone oxidoreductase chain 4L (MT-ND4L) from Trichosurus vulpecula (Brush-tailed possum).